Here is a 267-residue protein sequence, read N- to C-terminus: Tetrahydromethanopterin S-methyltransferase subunit C (267 aa).

7 helical membrane passes run 19–39 (IMAI…FMPA), 40–60 (QFSF…ADAV), 75–95 (IGMI…SVGG), 96–116 (IAGP…IGVL), 131–151 (AMVE…VVIA), 162–182 (YVVA…GILH), and 221–241 (GLMA…WAFM).

It belongs to the MtrC family. The complex is composed of 8 subunits; MtrA, MtrB, MtrC, MtrD, MtrE, MtrF, MtrG and MtrH.

It localises to the cell membrane. It catalyses the reaction 5-methyl-5,6,7,8-tetrahydromethanopterin + coenzyme M + 2 Na(+)(in) = 5,6,7,8-tetrahydromethanopterin + methyl-coenzyme M + 2 Na(+)(out). It participates in one-carbon metabolism; methanogenesis from CO(2); methyl-coenzyme M from 5,10-methylene-5,6,7,8-tetrahydromethanopterin: step 2/2. In terms of biological role, part of a complex that catalyzes the formation of methyl-coenzyme M and tetrahydromethanopterin from coenzyme M and methyl-tetrahydromethanopterin. This is an energy-conserving, sodium-ion translocating step. In Methanosarcina acetivorans (strain ATCC 35395 / DSM 2834 / JCM 12185 / C2A), this protein is Tetrahydromethanopterin S-methyltransferase subunit C.